The sequence spans 272 residues: Probable proteasome subunit beta type-5 (272 aa).

Positions 1–61 are cleaved as a propeptide — removed in mature form; that stretch reads MNSIVSKYTQ…KHCLIKMNHG (61 aa). Thr-62 functions as the Nucleophile in the catalytic mechanism.

The protein belongs to the peptidase T1B family. The 26S proteasome consists of a 20S proteasome core and two 19S regulatory subunits. The 20S proteasome core is composed of 28 subunits that are arranged in four stacked rings, resulting in a barrel-shaped structure. The two end rings are each formed by seven alpha subunits, and the two central rings are each formed by seven beta subunits. The catalytic chamber with the active sites is on the inside of the barrel.

The protein localises to the cytoplasm. Its subcellular location is the nucleus. The enzyme catalyses Cleavage of peptide bonds with very broad specificity.. Functionally, the proteasome is a multicatalytic proteinase complex which is characterized by its ability to cleave peptides with Arg, Phe, Tyr, Leu, and Glu adjacent to the leaving group at neutral or slightly basic pH. The proteasome has an ATP-dependent proteolytic activity. This chain is Probable proteasome subunit beta type-5 (pts1), found in Schizosaccharomyces pombe (strain 972 / ATCC 24843) (Fission yeast).